The primary structure comprises 307 residues: Voltage-dependent anion channel-forming protein alr2987 (307 aa).

Transmembrane regions (helical) follow at residues 19–39, 47–67, 209–229, and 238–258; these read VIGA…LVTL, VSQP…LLVF, PLAY…LLPF, and WTGL…AIGL.

The protein belongs to the anion channel-forming bestrophin (TC 1.A.46) family.

Its subcellular location is the cell membrane. This Nostoc sp. (strain PCC 7120 / SAG 25.82 / UTEX 2576) protein is Voltage-dependent anion channel-forming protein alr2987.